Consider the following 382-residue polypeptide: B3 domain-containing protein Os03g0622100 (382 aa).

The TF-B3 1 DNA-binding region spans 29–123; the sequence is CKHFLTYMVG…SFDVLIFDPS (95 aa). Composition is skewed to basic and acidic residues over residues 136–158 and 193–202; these read RGFGREEKSAGAEGGGRDGDKNG and QDHREEKKEG. A disordered region spans residues 136 to 222; that stretch reads RGFGREEKSA…EDVDKDGEDR (87 aa). The span at 203–218 shows a compositional bias: acidic residues; the sequence is DDEDEDEDEDEDVDKD. A DNA-binding region (TF-B3 2) is located at residues 261 to 363; it reads KVIHASHLLS…AGDRLRRRPR (103 aa).

The protein localises to the nucleus. The polypeptide is B3 domain-containing protein Os03g0622100 (Oryza sativa subsp. japonica (Rice)).